A 174-amino-acid chain; its full sequence is Large ribosomal subunit protein uL16 (174 aa).

The protein belongs to the universal ribosomal protein uL16 family.

The protein is Large ribosomal subunit protein uL16 of Methanocaldococcus jannaschii (strain ATCC 43067 / DSM 2661 / JAL-1 / JCM 10045 / NBRC 100440) (Methanococcus jannaschii).